The sequence spans 329 residues: Ribosomal RNA small subunit methyltransferase H (329 aa).

Residues 44-46 (GGY), Asp62, Asp110, and Gln117 each bind S-adenosyl-L-methionine. Residues 297-329 (APAELAANPRARSARLRSAERTSAPARRLGDAA) form a disordered region.

This sequence belongs to the methyltransferase superfamily. RsmH family.

Its subcellular location is the cytoplasm. The catalysed reaction is cytidine(1402) in 16S rRNA + S-adenosyl-L-methionine = N(4)-methylcytidine(1402) in 16S rRNA + S-adenosyl-L-homocysteine + H(+). Specifically methylates the N4 position of cytidine in position 1402 (C1402) of 16S rRNA. This is Ribosomal RNA small subunit methyltransferase H from Rhodospirillum centenum (strain ATCC 51521 / SW).